The chain runs to 475 residues: Ribulose bisphosphate carboxylase large chain (475 aa).

Residues 1–2 constitute a propeptide that is removed on maturation; that stretch reads MS. An N-acetylproline modification is found at Pro-3. At Lys-14 the chain carries N6,N6,N6-trimethyllysine. Asn-123 and Thr-173 together coordinate substrate. The active-site Proton acceptor is the Lys-175. Residue Lys-177 coordinates substrate. The Mg(2+) site is built by Lys-201, Asp-203, and Glu-204. At Lys-201 the chain carries N6-carboxylysine. Residue His-294 is the Proton acceptor of the active site. Substrate contacts are provided by Arg-295, His-327, and Ser-379.

It belongs to the RuBisCO large chain family. Type I subfamily. As to quaternary structure, heterohexadecamer of 8 large chains and 8 small chains; disulfide-linked. The disulfide link is formed within the large subunit homodimers. The cofactor is Mg(2+). In terms of processing, the disulfide bond which can form in the large chain dimeric partners within the hexadecamer appears to be associated with oxidative stress and protein turnover.

The protein resides in the plastid. The protein localises to the chloroplast. It carries out the reaction 2 (2R)-3-phosphoglycerate + 2 H(+) = D-ribulose 1,5-bisphosphate + CO2 + H2O. It catalyses the reaction D-ribulose 1,5-bisphosphate + O2 = 2-phosphoglycolate + (2R)-3-phosphoglycerate + 2 H(+). In terms of biological role, ruBisCO catalyzes two reactions: the carboxylation of D-ribulose 1,5-bisphosphate, the primary event in carbon dioxide fixation, as well as the oxidative fragmentation of the pentose substrate in the photorespiration process. Both reactions occur simultaneously and in competition at the same active site. This Pinus pinea (Italian stone pine) protein is Ribulose bisphosphate carboxylase large chain.